We begin with the raw amino-acid sequence, 283 residues long: Thymidylate synthase (283 aa).

Residue Arg-22 coordinates dUMP. The Nucleophile role is filled by Cys-160. Residues 180-183 (RSCD), Asn-191, and 221-223 (HIY) each bind dUMP. Position 183 (Asp-183) interacts with (6R)-5,10-methylene-5,6,7,8-tetrahydrofolate. Ala-282 serves as a coordination point for (6R)-5,10-methylene-5,6,7,8-tetrahydrofolate.

It belongs to the thymidylate synthase family. Bacterial-type ThyA subfamily. Homodimer.

It localises to the cytoplasm. It catalyses the reaction dUMP + (6R)-5,10-methylene-5,6,7,8-tetrahydrofolate = 7,8-dihydrofolate + dTMP. It participates in pyrimidine metabolism; dTTP biosynthesis. Its function is as follows. Catalyzes the reductive methylation of 2'-deoxyuridine-5'-monophosphate (dUMP) to 2'-deoxythymidine-5'-monophosphate (dTMP) while utilizing 5,10-methylenetetrahydrofolate (mTHF) as the methyl donor and reductant in the reaction, yielding dihydrofolate (DHF) as a by-product. This enzymatic reaction provides an intracellular de novo source of dTMP, an essential precursor for DNA biosynthesis. This is Thymidylate synthase from Shewanella frigidimarina (strain NCIMB 400).